Here is a 485-residue protein sequence, read N- to C-terminus: Glutamate--tRNA ligase (485 aa).

R6 contributes to the L-glutamate binding site. Residues 9–19 (PSPTGNLHIGT) carry the 'HIGH' region motif. Residues Y192 and 210 to 214 (RGEDH) contribute to the L-glutamate site. The 'KMSKS' region motif lies at 248–252 (KLSKR). K251 contributes to the ATP binding site.

The protein belongs to the class-I aminoacyl-tRNA synthetase family. Glutamate--tRNA ligase type 1 subfamily. Monomer. The cofactor is Does not require zinc..

It is found in the cytoplasm. It catalyses the reaction tRNA(Glu) + L-glutamate + ATP = L-glutamyl-tRNA(Glu) + AMP + diphosphate. Functionally, non-discriminating glutamyl-tRNA synthetase. Catalyzes the attachment of glutamate to tRNA(Glu) in a two-step reaction: glutamate is first activated by ATP to form Glu-AMP and then transferred to the acceptor end of tRNA(Glu). Acylates both tRNA(Glu) and tRNA(Gln) with glutamate, but has 13-fold higher efficiency with tRNA(Glu). In Thermosynechococcus vestitus (strain NIES-2133 / IAM M-273 / BP-1), this protein is Glutamate--tRNA ligase (gltX).